Here is an 85-residue protein sequence, read N- to C-terminus: Translation initiation factor IF-1 (85 aa).

The region spanning Met1–Ile72 is the S1-like domain.

It belongs to the IF-1 family. In terms of assembly, component of the 30S ribosomal translation pre-initiation complex which assembles on the 30S ribosome in the order IF-2 and IF-3, IF-1 and N-formylmethionyl-tRNA(fMet); mRNA recruitment can occur at any time during PIC assembly.

It is found in the cytoplasm. One of the essential components for the initiation of protein synthesis. Stabilizes the binding of IF-2 and IF-3 on the 30S subunit to which N-formylmethionyl-tRNA(fMet) subsequently binds. Helps modulate mRNA selection, yielding the 30S pre-initiation complex (PIC). Upon addition of the 50S ribosomal subunit IF-1, IF-2 and IF-3 are released leaving the mature 70S translation initiation complex. The polypeptide is Translation initiation factor IF-1 (Polaromonas naphthalenivorans (strain CJ2)).